The primary structure comprises 371 residues: Protein STRICTOSIDINE SYNTHASE-LIKE 6 (371 aa).

The first 21 residues, 1–21, serve as a signal peptide directing secretion; the sequence is MPVFLSSRFLFFCIIVPLLIS. Residues Asn101 and Asn137 are each glycosylated (N-linked (GlcNAc...) asparagine). Tyr303 carries the post-translational modification Phosphotyrosine.

This sequence belongs to the strictosidine synthase family.

Its subcellular location is the vacuole. The polypeptide is Protein STRICTOSIDINE SYNTHASE-LIKE 6 (Arabidopsis thaliana (Mouse-ear cress)).